Consider the following 717-residue polypeptide: Catalase-peroxidase (717 aa).

Residues 1 to 12 (MTSKGMCPVAHG) form the signal peptide. A cross-link (tryptophyl-tyrosyl-methioninium (Trp-Tyr) (with M-247)) is located at residues 93-221 (WHSAGSYRIA…LAAVMMGLIY (129 aa)). The active-site Proton acceptor is the His-94. The tryptophyl-tyrosyl-methioninium (Tyr-Met) (with W-93) cross-link spans 221 to 247 (YVNPEGVDGKPDPLKTAQDMRVTFARM). Residue His-262 participates in heme b binding.

This sequence belongs to the peroxidase family. Peroxidase/catalase subfamily. In terms of assembly, homodimer or homotetramer. The cofactor is heme b. In terms of processing, formation of the three residue Trp-Tyr-Met cross-link is important for the catalase, but not the peroxidase activity of the enzyme.

It catalyses the reaction H2O2 + AH2 = A + 2 H2O. The catalysed reaction is 2 H2O2 = O2 + 2 H2O. Its function is as follows. Bifunctional enzyme with both catalase and broad-spectrum peroxidase activity. The sequence is that of Catalase-peroxidase from Polynucleobacter asymbioticus (strain DSM 18221 / CIP 109841 / QLW-P1DMWA-1) (Polynucleobacter necessarius subsp. asymbioticus).